The primary structure comprises 95 residues: Putative septation protein SpoVG (95 aa).

The protein belongs to the SpoVG family.

Its function is as follows. Could be involved in septation. In Clostridium botulinum (strain ATCC 19397 / Type A), this protein is Putative septation protein SpoVG.